Reading from the N-terminus, the 652-residue chain is DNA ligase (652 aa).

NAD(+) contacts are provided by residues 29–33 (DSEYD), 78–79 (SL), and Glu-107. Catalysis depends on Lys-109, which acts as the N6-AMP-lysine intermediate. Residues Arg-130, Glu-164, Lys-278, and Lys-302 each contribute to the NAD(+) site. The Zn(2+) site is built by Cys-395, Cys-398, Cys-413, and Cys-418. Residues 577–652 (AADAALSGMT…IRDEDWLDSL (76 aa)) enclose the BRCT domain.

Belongs to the NAD-dependent DNA ligase family. LigA subfamily. It depends on Mg(2+) as a cofactor. Requires Mn(2+) as cofactor.

It carries out the reaction NAD(+) + (deoxyribonucleotide)n-3'-hydroxyl + 5'-phospho-(deoxyribonucleotide)m = (deoxyribonucleotide)n+m + AMP + beta-nicotinamide D-nucleotide.. DNA ligase that catalyzes the formation of phosphodiester linkages between 5'-phosphoryl and 3'-hydroxyl groups in double-stranded DNA using NAD as a coenzyme and as the energy source for the reaction. It is essential for DNA replication and repair of damaged DNA. The polypeptide is DNA ligase (Streptococcus sanguinis (strain SK36)).